The primary structure comprises 421 residues: Phosphoribosylamine--glycine ligase (421 aa).

The 207-residue stretch at 108–314 (KEIMVKYNVP…FAQNIDDIMM (207 aa)) folds into the ATP-grasp domain. 134–195 (IEEQGAPIVV…EEFLDGEEFS (62 aa)) contacts ATP. Glu284 and Asn286 together coordinate Mg(2+).

The protein belongs to the GARS family. The cofactor is Mg(2+). Requires Mn(2+) as cofactor.

The enzyme catalyses 5-phospho-beta-D-ribosylamine + glycine + ATP = N(1)-(5-phospho-beta-D-ribosyl)glycinamide + ADP + phosphate + H(+). The protein operates within purine metabolism; IMP biosynthesis via de novo pathway; N(1)-(5-phospho-D-ribosyl)glycinamide from 5-phospho-alpha-D-ribose 1-diphosphate: step 2/2. The sequence is that of Phosphoribosylamine--glycine ligase from Streptococcus pyogenes serotype M1.